Here is a 1051-residue protein sequence, read N- to C-terminus: Ubiquitin-activating enzyme E1 2 (1051 aa).

Positions 1–32 (MLPRKREIVAGEVEDLQKKTRAGEGEATREEG) are enriched in basic and acidic residues. Positions 1–42 (MLPRKREIVAGEVEDLQKKTRAGEGEATREEGDAAMAGRGNE) are disordered. 2 consecutive repeat copies span residues 56–194 (GRET…GSVF) and 453–605 (GSTL…QMVI). The segment at 56-605 (GRETMKPLFG…GAKCNTQMVI (550 aa)) is 2 approximate repeats. ATP-binding positions include Ala-472, Asp-498, Arg-509, Lys-522, and 570–571 (DN). Cys-626 (glycyl thioester intermediate) is an active-site residue.

It belongs to the ubiquitin-activating E1 family. In terms of assembly, monomer.

The catalysed reaction is ATP + ubiquitin + [E1 ubiquitin-activating enzyme]-L-cysteine = AMP + diphosphate + S-ubiquitinyl-[E1 ubiquitin-activating enzyme]-L-cysteine.. It functions in the pathway protein modification; protein ubiquitination. In terms of biological role, activates ubiquitin by first adenylating its C-terminal glycine residue with ATP, and thereafter linking this residue to the side chain of a cysteine residue in E1, yielding a ubiquitin-E1 thioester and free AMP. This chain is Ubiquitin-activating enzyme E1 2 (UBA2), found in Triticum aestivum (Wheat).